Here is a 442-residue protein sequence, read N- to C-terminus: L-seryl-tRNA(Sec) selenium transferase (442 aa).

N6-(pyridoxal phosphate)lysine is present on K284.

Belongs to the SelA family. It depends on pyridoxal 5'-phosphate as a cofactor.

The protein resides in the cytoplasm. It carries out the reaction L-seryl-tRNA(Sec) + selenophosphate + H(+) = L-selenocysteinyl-tRNA(Sec) + phosphate. The protein operates within aminoacyl-tRNA biosynthesis; selenocysteinyl-tRNA(Sec) biosynthesis; selenocysteinyl-tRNA(Sec) from L-seryl-tRNA(Sec) (bacterial route): step 1/1. In terms of biological role, converts seryl-tRNA(Sec) to selenocysteinyl-tRNA(Sec) required for selenoprotein biosynthesis. The sequence is that of L-seryl-tRNA(Sec) selenium transferase from Campylobacter fetus subsp. fetus (strain 82-40).